The chain runs to 329 residues: Biotin synthase (329 aa).

The Radical SAM core domain maps to 46–275 (FFGRRLKLVR…LNPKAELRAS (230 aa)). [4Fe-4S] cluster contacts are provided by cysteine 64, cysteine 68, and cysteine 71. Cysteine 108, cysteine 140, cysteine 200, and arginine 273 together coordinate [2Fe-2S] cluster.

It belongs to the radical SAM superfamily. Biotin synthase family. Homodimer. It depends on [4Fe-4S] cluster as a cofactor. [2Fe-2S] cluster is required as a cofactor.

It catalyses the reaction (4R,5S)-dethiobiotin + (sulfur carrier)-SH + 2 reduced [2Fe-2S]-[ferredoxin] + 2 S-adenosyl-L-methionine = (sulfur carrier)-H + biotin + 2 5'-deoxyadenosine + 2 L-methionine + 2 oxidized [2Fe-2S]-[ferredoxin]. The protein operates within cofactor biosynthesis; biotin biosynthesis; biotin from 7,8-diaminononanoate: step 2/2. Catalyzes the conversion of dethiobiotin (DTB) to biotin by the insertion of a sulfur atom into dethiobiotin via a radical-based mechanism. The chain is Biotin synthase from Thermus thermophilus (strain ATCC 27634 / DSM 579 / HB8).